An 89-amino-acid chain; its full sequence is Elongation factor 1-beta (89 aa).

The protein belongs to the EF-1-beta/EF-1-delta family.

Promotes the exchange of GDP for GTP in EF-1-alpha/GDP, thus allowing the regeneration of EF-1-alpha/GTP that could then be used to form the ternary complex EF-1-alpha/GTP/AAtRNA. This is Elongation factor 1-beta from Methanocella arvoryzae (strain DSM 22066 / NBRC 105507 / MRE50).